The sequence spans 125 residues: MPGKHVSRVRALYRRILLLHRALPPDLKALGDQYVKDEFRRHKTVGPGEAQRFLKEWETYAAVLWQQAEDSRQSSTGKACFGTSLPEEKLNDFRDEQIGQLQELMQEATKPNRQFSITESTKPQL.

The transit peptide at 1-30 (MPGKHVSRVRALYRRILLLHRALPPDLKAL) directs the protein to the mitochondrion.

This sequence belongs to the complex I LYR family. SDHAF3 subfamily. In terms of assembly, interacts with Sdhb within an Sdha-Sdhb subcomplex.

The protein localises to the mitochondrion matrix. Its function is as follows. Plays an essential role in the assembly of succinate dehydrogenase (SDH), an enzyme complex (also referred to as respiratory complex II) that is a component of both the tricarboxylic acid (TCA) cycle and the mitochondrial electron transport chain, and which couples the oxidation of succinate to fumarate with the reduction of ubiquinone (coenzyme Q) to ubiquinol. Promotes maturation of the iron-sulfur protein subunit Sdhb of the SDH catalytic dimer, protecting it from the deleterious effects of oxidants. May act together with SDHAF1. In Mus musculus (Mouse), this protein is Succinate dehydrogenase assembly factor 3, mitochondrial.